Consider the following 125-residue polypeptide: Photoactive yellow protein (125 aa).

Residues 23–86 form the PAS domain; that stretch reads IDDLAFGAIQ…GRFREGVANG (64 aa). Position 69 is an S-(4-hydroxycinnamyl)cysteine (cysteine 69).

It belongs to the photoactive yellow protein family. The 4-hydroxycinnamic acid (p-coumaric acid) chromophore is covalently bound via a thioester linkage.

Functionally, this photoactive protein is a photoreceptor with kinetics similar to that of rhodopsin. The polypeptide is Photoactive yellow protein (pyp) (Rhodothalassium salexigens (Rhodospirillum salexigens)).